We begin with the raw amino-acid sequence, 475 residues long: Glycogen synthase (475 aa).

Residue K15 participates in ADP-alpha-D-glucose binding.

It belongs to the glycosyltransferase 1 family. Bacterial/plant glycogen synthase subfamily.

It carries out the reaction [(1-&gt;4)-alpha-D-glucosyl](n) + ADP-alpha-D-glucose = [(1-&gt;4)-alpha-D-glucosyl](n+1) + ADP + H(+). It participates in glycan biosynthesis; glycogen biosynthesis. Its function is as follows. Synthesizes alpha-1,4-glucan chains using ADP-glucose. This Anaeromyxobacter sp. (strain Fw109-5) protein is Glycogen synthase.